The chain runs to 247 residues: Carboxy-S-adenosyl-L-methionine synthase (247 aa).

Residues Tyr40, 65–67 (GSS), 90–91 (DN), 122–123 (DI), Asn137, and Arg204 contribute to the S-adenosyl-L-methionine site.

Belongs to the class I-like SAM-binding methyltransferase superfamily. Cx-SAM synthase family. As to quaternary structure, homodimer.

The enzyme catalyses prephenate + S-adenosyl-L-methionine = carboxy-S-adenosyl-L-methionine + 3-phenylpyruvate + H2O. Catalyzes the conversion of S-adenosyl-L-methionine (SAM) to carboxy-S-adenosyl-L-methionine (Cx-SAM). This is Carboxy-S-adenosyl-L-methionine synthase from Pseudomonas fluorescens (strain ATCC BAA-477 / NRRL B-23932 / Pf-5).